We begin with the raw amino-acid sequence, 130 residues long: Small ribosomal subunit protein uS9 (130 aa).

Belongs to the universal ribosomal protein uS9 family.

The chain is Small ribosomal subunit protein uS9 from Aromatoleum aromaticum (strain DSM 19018 / LMG 30748 / EbN1) (Azoarcus sp. (strain EbN1)).